The chain runs to 344 residues: L-rhamnose-proton symporter (344 aa).

10 consecutive transmembrane segments (helical) span residues 4–24 (AITM…CFYA), 38–58 (WSVG…ALLL), 68–88 (FSLS…IGNI), 101–121 (MGIG…TPII), 137–157 (TLLG…AGQL), 175–195 (LVLA…MNAA), 214–234 (LPSY…FCFI), 259–279 (VLLS…YAWG), 290–310 (ISWM…GLVL), and 323–343 (VLSL…MGMA).

It belongs to the L-rhamnose transporter (TC 2.A.7.6) family.

The protein localises to the cell inner membrane. The catalysed reaction is L-rhamnopyranose(in) + H(+)(in) = L-rhamnopyranose(out) + H(+)(out). Functionally, uptake of L-rhamnose across the cytoplasmic membrane with the concomitant transport of protons into the cell (symport system). In Escherichia coli O157:H7, this protein is L-rhamnose-proton symporter.